Reading from the N-terminus, the 206-residue chain is Protein MIS12 homolog (206 aa).

The stretch at Asp102–Gln206 forms a coiled coil.

This sequence belongs to the mis12 family. Component of the MIS12 complex composed of MIS12, DSN1, NSL1 and PMF1. Also interacts with KNL1, CBX3, CBX5, NDC80 and ZWINT.

It localises to the chromosome. The protein localises to the centromere. It is found in the kinetochore. In terms of biological role, part of the MIS12 complex which is required for normal chromosome alignment and segregation and for kinetochore formation during mitosis. Essential for proper kinetochore microtubule attachments. The protein is Protein MIS12 homolog of Mus musculus (Mouse).